Reading from the N-terminus, the 89-residue chain is Protein YihD (89 aa).

It to H.influenzae HI_0845.

The chain is Protein YihD (yihD) from Escherichia coli O157:H7.